The chain runs to 348 residues: Glycerol-1-phosphate dehydrogenase [NAD(P)+] (348 aa).

Residues 94–98 and 116–119 contribute to the NAD(+) site; these read GKPID and TAAS. Residue Asp121 coordinates substrate. Residue Ser125 participates in NAD(+) binding. Asp168 provides a ligand contact to substrate. Zn(2+)-binding residues include Asp168 and His248. Residue His252 participates in substrate binding. His264 lines the Zn(2+) pocket.

Belongs to the glycerol-1-phosphate dehydrogenase family. Zn(2+) is required as a cofactor.

It localises to the cytoplasm. The catalysed reaction is sn-glycerol 1-phosphate + NAD(+) = dihydroxyacetone phosphate + NADH + H(+). It catalyses the reaction sn-glycerol 1-phosphate + NADP(+) = dihydroxyacetone phosphate + NADPH + H(+). It functions in the pathway membrane lipid metabolism; glycerophospholipid metabolism. In terms of biological role, catalyzes the NAD(P)H-dependent reduction of dihydroxyacetonephosphate (DHAP or glycerone phosphate) to glycerol 1-phosphate (G1P). The G1P thus generated is used as the glycerophosphate backbone of phospholipids in the cellular membranes of Archaea. This chain is Glycerol-1-phosphate dehydrogenase [NAD(P)+], found in Haloquadratum walsbyi (strain DSM 16790 / HBSQ001).